A 342-amino-acid polypeptide reads, in one-letter code: N-acetyl-gamma-glutamyl-phosphate reductase (342 aa).

Residue C149 is part of the active site.

It belongs to the NAGSA dehydrogenase family. Type 1 subfamily.

It localises to the cytoplasm. The enzyme catalyses N-acetyl-L-glutamate 5-semialdehyde + phosphate + NADP(+) = N-acetyl-L-glutamyl 5-phosphate + NADPH + H(+). It functions in the pathway amino-acid biosynthesis; L-arginine biosynthesis; N(2)-acetyl-L-ornithine from L-glutamate: step 3/4. Functionally, catalyzes the NADPH-dependent reduction of N-acetyl-5-glutamyl phosphate to yield N-acetyl-L-glutamate 5-semialdehyde. This chain is N-acetyl-gamma-glutamyl-phosphate reductase, found in Aromatoleum aromaticum (strain DSM 19018 / LMG 30748 / EbN1) (Azoarcus sp. (strain EbN1)).